Here is a 76-residue protein sequence, read N- to C-terminus: MEKKIIFLVVLVALLALPEFISSEVIKRDIPYKKRKFPYKSECLKACAAAFTGGDESRIQEGKPGFFKCTCYYTTG.

Residues 1–23 (MEKKIIFLVVLVALLALPEFISS) form the signal peptide.

The protein belongs to the scoloptoxin-15 family. Contains 2 disulfide bonds. As to expression, expressed by the venom gland.

It is found in the secreted. Its function is as follows. Voltage-gated calcium channel inhibitor (Cav) (8.6% block at 10 nM), when tested on DRG neurons. The protein is Omega-scoloptoxin(15)-Ssd3c of Scolopendra dehaani (Thai centipede).